A 137-amino-acid polypeptide reads, in one-letter code: Ribosome-binding factor A (137 aa).

Belongs to the RbfA family. Monomer. Binds 30S ribosomal subunits, but not 50S ribosomal subunits or 70S ribosomes.

Its subcellular location is the cytoplasm. Its function is as follows. One of several proteins that assist in the late maturation steps of the functional core of the 30S ribosomal subunit. Associates with free 30S ribosomal subunits (but not with 30S subunits that are part of 70S ribosomes or polysomes). Required for efficient processing of 16S rRNA. May interact with the 5'-terminal helix region of 16S rRNA. The protein is Ribosome-binding factor A of Nitrobacter winogradskyi (strain ATCC 25391 / DSM 10237 / CIP 104748 / NCIMB 11846 / Nb-255).